The primary structure comprises 175 residues: Large ribosomal subunit protein uL10 (175 aa).

The protein belongs to the universal ribosomal protein uL10 family. In terms of assembly, part of the ribosomal stalk of the 50S ribosomal subunit. The N-terminus interacts with L11 and the large rRNA to form the base of the stalk. The C-terminus forms an elongated spine to which L12 dimers bind in a sequential fashion forming a multimeric L10(L12)X complex.

Its function is as follows. Forms part of the ribosomal stalk, playing a central role in the interaction of the ribosome with GTP-bound translation factors. In Halorhodospira halophila (strain DSM 244 / SL1) (Ectothiorhodospira halophila (strain DSM 244 / SL1)), this protein is Large ribosomal subunit protein uL10.